A 340-amino-acid chain; its full sequence is DNA-directed RNA polymerase subunit alpha (340 aa).

Residues 1–236 are alpha N-terminal domain (alpha-NTD); the sequence is MLSLSKNWNT…EQLQLFIAFE (236 aa). Residues 251-340 form an alpha C-terminal domain (alpha-CTD) region; the sequence is FSPYLLKRVD…LSKRYEDSYN (90 aa).

This sequence belongs to the RNA polymerase alpha chain family. In terms of assembly, homodimer. The RNAP catalytic core consists of 2 alpha, 1 beta, 1 beta' and 1 omega subunit. When a sigma factor is associated with the core the holoenzyme is formed, which can initiate transcription.

It carries out the reaction RNA(n) + a ribonucleoside 5'-triphosphate = RNA(n+1) + diphosphate. DNA-dependent RNA polymerase catalyzes the transcription of DNA into RNA using the four ribonucleoside triphosphates as substrates. This is DNA-directed RNA polymerase subunit alpha from Rickettsia typhi (strain ATCC VR-144 / Wilmington).